The following is a 243-amino-acid chain: I/6 autoantigen (243 aa).

An EF-hand domain is found at L110–R145. Residues P166–C243 are disordered. Positions P176–Q196 are enriched in basic residues. Tandem repeats lie at residues R181 to Q188, G189 to Q196, R197 to Q204, R205 to Q212, R213 to Q220, and K221 to G228. Positions R181–G228 are 6 X 8 AA tandem repeats. The span at Q198 to Q220 shows a compositional bias: basic and acidic residues.

The protein localises to the cytoplasm. Its subcellular location is the cytoskeleton. Microtubule-associated protein that may be involved in cross-linking microtubules. The chain is I/6 autoantigen from Trypanosoma brucei brucei.